A 430-amino-acid polypeptide reads, in one-letter code: Cortical fragment-lytic enzyme (430 aa).

LysM domains follow at residues 3 to 47 (QIVT…ALIV) and 52 to 96 (NNYY…QLYI). The GH18 domain maps to 104-430 (VESIAYLQPS…VENFTITKKG (327 aa)). E219 functions as the Proton donor in the catalytic mechanism.

The protein belongs to the glycosyl hydrolase 18 family. Chitinase class II subfamily.

Its subcellular location is the forespore. N-acetylglucosaminidase involved in cortex peptidoglycan degradation during germination. Cleaves only partially degraded spore peptidoglycans. Recognizes muramic acid delta-lactam residues specific to spore peptidoglycans. This chain is Cortical fragment-lytic enzyme, found in Bacillus anthracis.